The sequence spans 659 residues: MANSPAAPAPTTTTGGDSRRRLSASIEAICKRRFRRNSKGGGRSDMVKPFNIINFSTQDKNSSCCCFTKFQIVKLLLFILLSATLFTIIYSPEAYHHSLSHSSSRWIWRRQDPRYFSDLDINWDDVTKTLENIEEGRTIGVLNFDSNEIQRWREVSKSKDNGDEEKVVVLNLDYADKNVTWDALYPEWIDEEQETEVPVCPNIPNIKVPTRRLDLIVVKLPCRKEGNWSRDVGRLHLQLAAATVAASAKGFFRGHVFFVSRCFPIPNLFRCKDLVSRRGDVWLYKPNLDTLRDKLQLPVGSCELSLPLGIQDRPSLGNPKREAYATILHSAHVYVCGAIAAAQSIRQSGSTRDLVILVDDNISGYHRSGLEAAGWQIRTIQRIRNPKAEKDAYNEWNYSKFRLWQLTDYDKIIFIDADLLILRNIDFLFSMPEISATGNNGTLFNSGVMVIEPCNCTFQLLMEHINEIESYNGGDQGYLNEVFTWWHRIPKHMNFLKHFWIGDEDDAKRKKTELFGAEPPVLYVLHYLGMKPWLCYRDYDCNFNSDIFVEFATDIAHRKWWMVHDAMPQELHQFCYLRSKQKAQLEYDRRQAEAANYADGHWKIRVKDPRFKICIDKLCNWKSMLRHWGESNWTDYESFVPTPPAITVDRRSSLPGHNL.

Residues 1–14 (MANSPAAPAPTTTT) are compositionally biased toward low complexity. The tract at residues 1–20 (MANSPAAPAPTTTTGGDSRR) is disordered. A helical; Signal-anchor for type II membrane protein transmembrane segment spans residues 70 to 90 (FQIVKLLLFILLSATLFTIIY). Mn(2+) contacts are provided by Asp416 and Asp418. Residues 416-418 (DAD), 445-447 (NSG), 472-476 (NGGDQ), and 526-531 (HYLGMK) each bind substrate. His526 provides a ligand contact to Mn(2+).

The protein belongs to the glycosyltransferase 8 family. Glycogenin subfamily. Requires Mn(2+) as cofactor.

The protein resides in the golgi apparatus membrane. Glycosyltransferase required for the addition of both glucuronic acid and 4-O-methylglucuronic acid branches to xylan in stem cell walls. In association with GUX2, is responsible for almost all of the substitutions of the xylan backbone in stem glucuronoxylan. This is UDP-glucuronate:xylan alpha-glucuronosyltransferase 1 (GUX1) from Arabidopsis thaliana (Mouse-ear cress).